Consider the following 348-residue polypeptide: 2-heptyl-4(1H)-quinolone synthase subunit PqsC (348 aa).

Catalysis depends on cysteine 129, which acts as the Acyl-thioester intermediate. Histidine 269 is a catalytic residue.

Belongs to the thiolase-like superfamily. FabH family. Forms a tight complex with PqsB.

It localises to the cytoplasm. The catalysed reaction is (2-aminobenzoyl)acetate + octanoyl-CoA + H(+) = 2-heptyl-4(1H)-quinolone + CO2 + CoA + H2O. Its activity is regulated as follows. Folding of PqsC and binding of octanoate are promoted by PqsB. Binding of the octanoyl group probably increases the binding affinity of the complex for 2-ABA. Activity of the complex is inhibited by 2-aminoacetophenone (2-AA). Required for the biosynthesis of the quorum-sensing signaling molecules 2-heptyl-4(1H)-quinolone (HHQ) and 2-heptyl-3-hydroxy-4(1H)-quinolone (Pseudomonas quinolone signal or PQS), which are important for biofilm formation and virulence. The PqsC/PqsB complex catalyzes the condensation of 2-aminobenzoylacetate (2-ABA) and octanoyl-CoA to form HHQ. First, PqsC acquires an octanoyl group from octanoyl-CoA and forms an octanoyl-PqsC intermediate. Then, together with PqsB, it catalyzes the coupling of 2-ABA with the octanoate group, leading to decarboxylation and dehydration, and resulting in closure of the quinoline ring. In Pseudomonas aeruginosa (strain ATCC 15692 / DSM 22644 / CIP 104116 / JCM 14847 / LMG 12228 / 1C / PRS 101 / PAO1), this protein is 2-heptyl-4(1H)-quinolone synthase subunit PqsC.